Reading from the N-terminus, the 105-residue chain is Nitrogenase-stabilizing/protective protein NifW 2 (105 aa).

This sequence belongs to the NifW family.

In terms of biological role, may protect the nitrogenase Fe-Mo protein from oxidative damage. This Trichormus variabilis (strain ATCC 29413 / PCC 7937) (Anabaena variabilis) protein is Nitrogenase-stabilizing/protective protein NifW 2 (nifW2).